A 755-amino-acid chain; its full sequence is Primary amine oxidase (755 aa).

A signal peptide spans 1 to 30 (MANGLKFSPRKTALALAVAVVCAWQSPVFA). Substrate is bound by residues 411–422 (YLDSGDYGMGTL) and 493–498 (VGNYDY). Catalysis depends on aspartate 413, which acts as the Proton acceptor. Catalysis depends on tyrosine 496, which acts as the Schiff-base intermediate with substrate; via topaquinone. Position 496 is a 2',4',5'-topaquinone (tyrosine 496). Residues histidine 554 and histidine 556 each coordinate Cu cation. Ca(2+) contacts are provided by aspartate 563, leucine 564, aspartate 565, glutamate 603, tyrosine 697, aspartate 700, glutamate 702, and aspartate 708. Residue aspartate 563 participates in Mn(2+) binding. A Mn(2+)-binding site is contributed by aspartate 565. A Mn(2+)-binding site is contributed by aspartate 708. Residue histidine 719 participates in Cu cation binding.

It belongs to the copper/topaquinone oxidase family. As to quaternary structure, homodimer. Cu cation is required as a cofactor. Zn(2+) serves as cofactor. It depends on Ca(2+) as a cofactor. Requires L-topaquinone as cofactor. The cofactor is Mn(2+). Topaquinone (TPQ) is generated by copper-dependent autoxidation of a specific tyrosyl residue.

The protein localises to the periplasm. The catalysed reaction is a primary methyl amine + O2 + H2O = an aldehyde + H2O2 + NH4(+). Functionally, active on tyramine, tryptamine, beta-phenethylamine and dopamine. The sequence is that of Primary amine oxidase (maoA) from Klebsiella aerogenes (Enterobacter aerogenes).